Consider the following 63-residue polypeptide: Beta-defensin 35 (63 aa).

Residues 1–23 form the signal peptide; it reads MPQTFFVFCFLFFVFLQLFPGTG. Disulfide bonds link cysteine 31–cysteine 58, cysteine 38–cysteine 52, and cysteine 42–cysteine 59.

The protein belongs to the beta-defensin family. Expressed in testis, epididymis (caput, corpus and cauda), kidney and neonatal and adult brain.

The protein resides in the secreted. Its function is as follows. Has antibacterial activity. In Mus musculus (Mouse), this protein is Beta-defensin 35 (Defb35).